Consider the following 319-residue polypeptide: Ribonucleoside-diphosphate reductase small chain (319 aa).

Fe cation contacts are provided by aspartate 70, glutamate 101, and histidine 104. The active site involves tyrosine 108. Fe cation contacts are provided by glutamate 163, glutamate 197, and histidine 200. Positions 313-319 (FSLDVDF) are interaction with R1.

It belongs to the ribonucleoside diphosphate reductase small chain family. Interacts with RNR1/OPG080 subunit. Can interact with host RNR1 supunit. Fe cation is required as a cofactor.

The enzyme catalyses a 2'-deoxyribonucleoside 5'-diphosphate + [thioredoxin]-disulfide + H2O = a ribonucleoside 5'-diphosphate + [thioredoxin]-dithiol. Its function is as follows. Ribonucleoside-diphosphate reductase holoenzyme provides the precursors necessary for viral DNA synthesis. Allows virus growth in non-dividing cells. Catalyzes the biosynthesis of deoxyribonucleotides from the corresponding ribonucleotides. The chain is Ribonucleoside-diphosphate reductase small chain (OPG048) from Vaccinia virus (strain Ankara) (VACV).